The chain runs to 259 residues: Trans-aconitate 2-methyltransferase (259 aa).

It belongs to the methyltransferase superfamily. Tam family.

Its subcellular location is the cytoplasm. It catalyses the reaction trans-aconitate + S-adenosyl-L-methionine = (E)-3-(methoxycarbonyl)pent-2-enedioate + S-adenosyl-L-homocysteine. Functionally, catalyzes the S-adenosylmethionine monomethyl esterification of trans-aconitate. The polypeptide is Trans-aconitate 2-methyltransferase (Variovorax paradoxus (strain S110)).